A 199-amino-acid chain; its full sequence is Holliday junction branch migration complex subunit RuvA (199 aa).

A domain I region spans residues 1–64 (MIGRLRGILL…DDAHLLYAFA (64 aa)). The domain II stretch occupies residues 65–143 (SEKERGLFRS…DMPESGVAGM (79 aa)). The interval 144–150 (RPDRVDG) is flexible linker. The domain III stretch occupies residues 151-199 (SAPGTVAEAVSALVALGYKPNEASRAVRRLDTEALTTEEIIRQALQRML).

This sequence belongs to the RuvA family. As to quaternary structure, homotetramer. Forms an RuvA(8)-RuvB(12)-Holliday junction (HJ) complex. HJ DNA is sandwiched between 2 RuvA tetramers; dsDNA enters through RuvA and exits via RuvB. An RuvB hexamer assembles on each DNA strand where it exits the tetramer. Each RuvB hexamer is contacted by two RuvA subunits (via domain III) on 2 adjacent RuvB subunits; this complex drives branch migration. In the full resolvosome a probable DNA-RuvA(4)-RuvB(12)-RuvC(2) complex forms which resolves the HJ.

The protein resides in the cytoplasm. In terms of biological role, the RuvA-RuvB-RuvC complex processes Holliday junction (HJ) DNA during genetic recombination and DNA repair, while the RuvA-RuvB complex plays an important role in the rescue of blocked DNA replication forks via replication fork reversal (RFR). RuvA specifically binds to HJ cruciform DNA, conferring on it an open structure. The RuvB hexamer acts as an ATP-dependent pump, pulling dsDNA into and through the RuvAB complex. HJ branch migration allows RuvC to scan DNA until it finds its consensus sequence, where it cleaves and resolves the cruciform DNA. This is Holliday junction branch migration complex subunit RuvA from Nitrosococcus oceani (strain ATCC 19707 / BCRC 17464 / JCM 30415 / NCIMB 11848 / C-107).